Consider the following 168-residue polypeptide: Ubiquitin-conjugating enzyme E2 2 (168 aa).

A UBC core domain is found at 4-150 (PAKRRLMRDF…VRETVENSWN (147 aa)). Residue Cys88 is the Glycyl thioester intermediate of the active site. A disordered region spans residues 143–168 (ETVENSWNEDDEDEDEDEDEDIDDAE). Acidic residues predominate over residues 149–168 (WNEDDEDEDEDEDEDIDDAE).

This sequence belongs to the ubiquitin-conjugating enzyme family.

The protein resides in the cytoplasm. It localises to the nucleus. It catalyses the reaction S-ubiquitinyl-[E1 ubiquitin-activating enzyme]-L-cysteine + [E2 ubiquitin-conjugating enzyme]-L-cysteine = [E1 ubiquitin-activating enzyme]-L-cysteine + S-ubiquitinyl-[E2 ubiquitin-conjugating enzyme]-L-cysteine.. Its pathway is protein modification; protein ubiquitination. In terms of biological role, catalyzes the covalent attachment of ubiquitin to other proteins. Plays a role in transcription regulation by catalyzing the monoubiquitination of histone H2B to form H2BK123ub1. H2BK123ub1 gives a specific tag for epigenetic transcriptional activation and is also a prerequisite for H3K4me and H3K79me formation. Also involved in postreplication repair of UV-damaged DNA, in N-end rule-dependent protein degradation and in sporulation. The polypeptide is Ubiquitin-conjugating enzyme E2 2 (UBC2) (Debaryomyces hansenii (strain ATCC 36239 / CBS 767 / BCRC 21394 / JCM 1990 / NBRC 0083 / IGC 2968) (Yeast)).